The primary structure comprises 39 residues: Omega-theraphotoxin-Asp1g (39 aa).

3 cysteine pairs are disulfide-bonded: Cys4-Cys25, Cys8-Cys31, and Cys17-Cys36.

It belongs to the neurotoxin 12 (Hwtx-2) family. 06 (TXP1) subfamily. As to expression, expressed by the venom gland.

It localises to the secreted. Inhibits voltage-gated calcium channels (Cav) in rat cerebellar granule cells. Has insecticidal activity. In Aphonopelma sp. (American tarantula), this protein is Omega-theraphotoxin-Asp1g.